The following is a 178-amino-acid chain: SCAN domain-containing protein 1 (178 aa).

A disordered region spans residues 1–107 (MAATEQSLAP…GSRPGPETFR (107 aa)). Positions 9–18 (APAGSSAPPS) are enriched in low complexity. Over residues 36–54 (GSSSTPEAPSIPDSSNPSA) the composition is skewed to polar residues. In terms of domain architecture, SCAN box spans 107 to 178 (RQRFRQFRYQ…RRRTDVRITG (72 aa)).

As to quaternary structure, interacts with ZNF202.

The protein resides in the nucleus. In terms of biological role, may regulate transcriptional activity. The protein is SCAN domain-containing protein 1 (SCAND1) of Bos taurus (Bovine).